Here is a 48-residue protein sequence, read N- to C-terminus: uncharacterized protein (48 aa).

This is an uncharacterized protein from Acidianus hospitalis (AFV-1).